Reading from the N-terminus, the 222-residue chain is uncharacterized protein (222 aa).

This is an uncharacterized protein from Methanocaldococcus jannaschii (strain ATCC 43067 / DSM 2661 / JAL-1 / JCM 10045 / NBRC 100440) (Methanococcus jannaschii).